The primary structure comprises 211 residues: Cytochrome c biogenesis ATP-binding export protein CcmA (211 aa).

An ABC transporter domain is found at 8-210 (LEAKNLQCER…EVRRIQLGAV (203 aa)). Residue 40 to 47 (GPNGAGKT) participates in ATP binding.

Belongs to the ABC transporter superfamily. CcmA exporter (TC 3.A.1.107) family. As to quaternary structure, the complex is composed of two ATP-binding proteins (CcmA) and two transmembrane proteins (CcmB).

It localises to the cell inner membrane. The catalysed reaction is heme b(in) + ATP + H2O = heme b(out) + ADP + phosphate + H(+). In terms of biological role, part of the ABC transporter complex CcmAB involved in the biogenesis of c-type cytochromes; once thought to export heme, this seems not to be the case, but its exact role is uncertain. Responsible for energy coupling to the transport system. The sequence is that of Cytochrome c biogenesis ATP-binding export protein CcmA from Hahella chejuensis (strain KCTC 2396).